A 247-amino-acid chain; its full sequence is Coproheme decarboxylase (247 aa).

Fe-coproporphyrin III is bound by residues R129, 143 to 147 (YPMDK), H170, Q183, and S221. The active site involves Y143.

The protein belongs to the ChdC family. Type 1 subfamily. The cofactor is Fe-coproporphyrin III.

The catalysed reaction is Fe-coproporphyrin III + 2 H2O2 + 2 H(+) = heme b + 2 CO2 + 4 H2O. It catalyses the reaction Fe-coproporphyrin III + H2O2 + H(+) = harderoheme III + CO2 + 2 H2O. The enzyme catalyses harderoheme III + H2O2 + H(+) = heme b + CO2 + 2 H2O. The protein operates within porphyrin-containing compound metabolism; protoheme biosynthesis. Involved in coproporphyrin-dependent heme b biosynthesis. Catalyzes the decarboxylation of Fe-coproporphyrin III (coproheme) to heme b (protoheme IX), the last step of the pathway. The reaction occurs in a stepwise manner with a three-propionate intermediate. The protein is Coproheme decarboxylase of Bacillus cereus (strain ATCC 10987 / NRS 248).